The following is a 162-amino-acid chain: NADH-quinone oxidoreductase subunit I (162 aa).

4Fe-4S ferredoxin-type domains are found at residues 53-83 (LRRYANGEERCIACKLCEAICPAQAITIEAE) and 93-122 (TRYDIDMTKCIYCGFCEEACPVDAIVEGPN). 8 residues coordinate [4Fe-4S] cluster: Cys-63, Cys-66, Cys-69, Cys-73, Cys-102, Cys-105, Cys-108, and Cys-112.

Belongs to the complex I 23 kDa subunit family. NDH-1 is composed of 14 different subunits. Subunits NuoA, H, J, K, L, M, N constitute the membrane sector of the complex. [4Fe-4S] cluster serves as cofactor.

The protein localises to the cell inner membrane. The enzyme catalyses a quinone + NADH + 5 H(+)(in) = a quinol + NAD(+) + 4 H(+)(out). Its function is as follows. NDH-1 shuttles electrons from NADH, via FMN and iron-sulfur (Fe-S) centers, to quinones in the respiratory chain. The immediate electron acceptor for the enzyme in this species is believed to be ubiquinone. Couples the redox reaction to proton translocation (for every two electrons transferred, four hydrogen ions are translocated across the cytoplasmic membrane), and thus conserves the redox energy in a proton gradient. This Rhodospirillum rubrum (strain ATCC 11170 / ATH 1.1.1 / DSM 467 / LMG 4362 / NCIMB 8255 / S1) protein is NADH-quinone oxidoreductase subunit I.